The chain runs to 307 residues: Elongation factor Ts (307 aa).

The involved in Mg(2+) ion dislocation from EF-Tu stretch occupies residues 80–83; it reads TDFV.

It belongs to the EF-Ts family.

The protein localises to the cytoplasm. In terms of biological role, associates with the EF-Tu.GDP complex and induces the exchange of GDP to GTP. It remains bound to the aminoacyl-tRNA.EF-Tu.GTP complex up to the GTP hydrolysis stage on the ribosome. This chain is Elongation factor Ts, found in Rhizorhabdus wittichii (strain DSM 6014 / CCUG 31198 / JCM 15750 / NBRC 105917 / EY 4224 / RW1) (Sphingomonas wittichii).